Consider the following 217-residue polypeptide: Adenylate kinase (217 aa).

An ATP-binding site is contributed by 10–15; the sequence is GAGKGT. The interval 30 to 59 is NMP; sequence STGDMLRAAVKAGTPLGLQAKDIMASGGLV. Residues Thr-31, Arg-36, 57 to 59, 85 to 88, and Gln-92 contribute to the AMP site; these read GLV and GFPR. The LID stretch occupies residues 122–159; the sequence is GRRVHEASGRVYHIIHNAPRVEGHDDVTGEPLVQRPDD. ATP-binding positions include Arg-123 and 132-133; that span reads VY. AMP contacts are provided by Arg-156 and Arg-167. Gly-203 lines the ATP pocket.

It belongs to the adenylate kinase family. As to quaternary structure, monomer.

Its subcellular location is the cytoplasm. The catalysed reaction is AMP + ATP = 2 ADP. It participates in purine metabolism; AMP biosynthesis via salvage pathway; AMP from ADP: step 1/1. Catalyzes the reversible transfer of the terminal phosphate group between ATP and AMP. Plays an important role in cellular energy homeostasis and in adenine nucleotide metabolism. In Cellvibrio japonicus (strain Ueda107) (Pseudomonas fluorescens subsp. cellulosa), this protein is Adenylate kinase.